Reading from the N-terminus, the 201-residue chain is Two-component response regulator ORR10 (201 aa).

Residues 10–142 (HVLAVDDSLP…DMSKLKPHIL (133 aa)) enclose the Response regulatory domain. Residue Asp-75 is modified to 4-aspartylphosphate. Residues 149–201 (HYQQEQHLQSNSESNNSSNPTSENSSSSTSTNSHKRKAVDEEILPHTIRPRHS) are disordered. Residues 158–180 (SNSESNNSSNPTSENSSSSTSTN) are compositionally biased toward low complexity.

It belongs to the ARR family. Type-A subfamily. In terms of processing, two-component system major event consists of a His-to-Asp phosphorelay between a sensor histidine kinase (HK) and a response regulator (RR). In plants, the His-to-Asp phosphorelay involves an additional intermediate named Histidine-containing phosphotransfer protein (HPt). This multistep phosphorelay consists of a His-Asp-His-Asp sequential transfer of a phosphate group between first a His and an Asp of the HK protein, followed by the transfer to a conserved His of the HPt protein and finally the transfer to an Asp in the receiver domain of the RR protein. In terms of tissue distribution, expressed in mature leaves, and at low levels in roots, shoots and flowers.

Functions as a response regulator involved in His-to-Asp phosphorelay signal transduction system. Phosphorylation of the Asp residue in the receiver domain activates the ability of the protein to promote the transcription of target genes. Type-A response regulators seem to act as negative regulators of the cytokinin signaling. The sequence is that of Two-component response regulator ORR10 from Oryza sativa subsp. indica (Rice).